A 234-amino-acid chain; its full sequence is ATP synthase subunit a 2 (234 aa).

A run of 5 helical transmembrane segments spans residues 20–40, 78–98, 107–127, 169–189, and 194–214; these read ATLI…WFVT, YLPF…LSVI, SLST…LYGV, VMSG…FFPV, and LGLL…MVFI.

Belongs to the ATPase A chain family. As to quaternary structure, F-type ATPases have 2 components, CF(1) - the catalytic core - and CF(0) - the membrane proton channel. CF(1) has five subunits: alpha(3), beta(3), gamma(1), delta(1), epsilon(1). CF(0) has four main subunits: a, b, b' and c.

It is found in the cellular thylakoid membrane. In terms of biological role, key component of the proton channel; it plays a direct role in the translocation of protons across the membrane. This is ATP synthase subunit a 2 from Acaryochloris marina (strain MBIC 11017).